Reading from the N-terminus, the 189-residue chain is uncharacterized protein (189 aa).

The span at 105-115 (EKLEKEEESKT) shows a compositional bias: basic and acidic residues. The tract at residues 105–189 (EKLEKEEESK…TDDEKTEVST (85 aa)) is disordered. The segment covering 116 to 136 (AKKRAKRLRQKAAAKKRKLTK) has biased composition (basic residues). Acidic residues predominate over residues 141-151 (SDESSSDDSDS). Residues 161–177 (SEGKQNTEVEDKDKVEK) show a composition bias toward basic and acidic residues. The segment covering 178–189 (EETDDEKTEVST) has biased composition (acidic residues).

This is an uncharacterized protein from Caenorhabditis elegans.